The primary structure comprises 238 residues: Ribonuclease PH (238 aa).

Phosphate contacts are provided by residues Arg86 and 124–126 (GTR).

It belongs to the RNase PH family. Homohexameric ring arranged as a trimer of dimers.

The catalysed reaction is tRNA(n+1) + phosphate = tRNA(n) + a ribonucleoside 5'-diphosphate. Its function is as follows. Phosphorolytic 3'-5' exoribonuclease that plays an important role in tRNA 3'-end maturation. Removes nucleotide residues following the 3'-CCA terminus of tRNAs; can also add nucleotides to the ends of RNA molecules by using nucleoside diphosphates as substrates, but this may not be physiologically important. Probably plays a role in initiation of 16S rRNA degradation (leading to ribosome degradation) during starvation. The protein is Ribonuclease PH of Trichlorobacter lovleyi (strain ATCC BAA-1151 / DSM 17278 / SZ) (Geobacter lovleyi).